A 324-amino-acid polypeptide reads, in one-letter code: MAKIDVHHHFYPPAMRQALDRAGGDPSGWYIPPWTLELDQDITRQMKVTTTILSVTAPGPGIEPDVTKAAALARSCNESAAAIRDAKPQQYGFFASVPSLFDTAAVLKEIEYACTTLRADGVTLFTRYGKGSNYLGHAAFRPIWADLSRRGAVVFIHPTHPVDTQLINTWLPQPMFDYPHETGRAAMDLLTSGILQDYPGCKIILSHAGGTLPYLIHRAATMLPLMPRTLGLSTEELVEAARTFYFDTAISSNPVTLKALFEFAAPGHVLFGSDFPNAPHDAILRFTNFLEAYELPEETKRQVDSGAALELFPRLKGILDKAKL.

His-7, His-9, His-157, and Asp-274 together coordinate Zn(2+).

The protein belongs to the metallo-dependent hydrolases superfamily. ACMSD family. Monomer.

It localises to the cytoplasm. Its subcellular location is the cytosol. The catalysed reaction is 6-methylsalicylate + H(+) = 3-methylphenol + CO2. The protein operates within mycotoxin biosynthesis; patulin biosynthesis. Functionally, 6-methylsalicylic acid decarboxylase; part of the gene cluster that mediates the biosynthesis of patulin, an acetate-derived tetraketide mycotoxin produced by several fungal species that shows antimicrobial properties against several bacteria. PatG catalyzes the decarboxylation of 6-methylsalicylic acid to yield m-cresol. The pathway begins with the synthesis of 6-methylsalicylic acid by the polyketide synthase (PKS) patK via condensation of acetate and malonate units. The 6-methylsalicylic acid decarboxylase patG then catalyzes the decarboxylation of 6-methylsalicylic acid to yield m-cresol (also known as 3-methylphenol). These first reactions occur in the cytosol. The intermediate m-cresol is then transported into the endoplasmic reticulum where the cytochrome P450 monooxygenase patH converts it to m-hydroxybenzyl alcohol, which is further converted to gentisyl alcohol by the cytochrome P450 monooxygenase patI. The oxidoreductases patJ and patO further convert gentisyl alcohol to isoepoxydon in the vacuole. PatN catalyzes then the transformation of isoepoxydon into phyllostine. The cluster protein patF is responsible for the conversion from phyllostine to neopatulin whereas the alcohol dehydrogenase patD converts neopatulin to E-ascladiol. The steps between isoepoxydon and E-ascladiol occur in the cytosol, and E-ascladiol is probably secreted to the extracellular space by one of the cluster-specific transporters patC or patM. Finally, the secreted patulin synthase patE catalyzes the conversion of E-ascladiol to patulin. The sequence is that of 6-methylsalicylic acid decarboxylase from Penicillium expansum (Blue mold rot fungus).